The sequence spans 64 residues: Large ribosomal subunit protein bL35 (64 aa).

This sequence belongs to the bacterial ribosomal protein bL35 family.

The chain is Large ribosomal subunit protein bL35 from Shewanella baltica (strain OS223).